The primary structure comprises 178 residues: Nicotinamide-nucleotide adenylyltransferase (178 aa).

The protein belongs to the archaeal NMN adenylyltransferase family.

The protein resides in the cytoplasm. The enzyme catalyses beta-nicotinamide D-ribonucleotide + ATP + H(+) = diphosphate + NAD(+). It functions in the pathway cofactor biosynthesis; NAD(+) biosynthesis; NAD(+) from nicotinamide D-ribonucleotide: step 1/1. The chain is Nicotinamide-nucleotide adenylyltransferase from Pyrobaculum aerophilum (strain ATCC 51768 / DSM 7523 / JCM 9630 / CIP 104966 / NBRC 100827 / IM2).